We begin with the raw amino-acid sequence, 348 residues long: Uroporphyrinogen decarboxylase (348 aa).

Residues 27–31, Phe46, Asp76, Tyr152, Ser207, and His320 contribute to the substrate site; that span reads RQAGR.

This sequence belongs to the uroporphyrinogen decarboxylase family. Homodimer.

The protein resides in the cytoplasm. It carries out the reaction uroporphyrinogen III + 4 H(+) = coproporphyrinogen III + 4 CO2. It participates in porphyrin-containing compound metabolism; protoporphyrin-IX biosynthesis; coproporphyrinogen-III from 5-aminolevulinate: step 4/4. Functionally, catalyzes the decarboxylation of four acetate groups of uroporphyrinogen-III to yield coproporphyrinogen-III. The chain is Uroporphyrinogen decarboxylase from Bacillus thuringiensis (strain Al Hakam).